A 429-amino-acid polypeptide reads, in one-letter code: Xyloglucan O-acetyltransferase 1 (429 aa).

At 1-20 the chain is on the cytoplasmic side; it reads MGSPFKDHHHHHHPFSLAKK. Residues 21–41 traverse the membrane as a helical; Signal-anchor for type II membrane protein segment; it reads LIPWTFYAMIPLVLFRLYFYP. Over 42–429 the chain is Lumenal; that stretch reads YPLHNITTPI…KWDYESRREE (388 aa). N-linked (GlcNAc...) asparagine glycosylation is found at Asn-46 and Asn-89. Disulfide bonds link Cys-72-Cys-122, Cys-93-Cys-158, Cys-102-Cys-402, and Cys-317-Cys-398. Positions 145-147 match the GDS motif motif; sequence GDS. Catalysis depends on Ser-147, which acts as the Nucleophile. N-linked (GlcNAc...) asparagine glycans are attached at residues Asn-189, Asn-263, and Asn-351. Asp-397 (proton donor) is an active-site residue. The DXXH motif motif lies at 397 to 400; the sequence is DCVH. The active-site Proton acceptor is His-400.

This sequence belongs to the PC-esterase family. TBL subfamily.

The protein resides in the golgi apparatus membrane. Xyloglucan acetyltransferase that catalyzes the acetylation of fucosylated Gal residues on xyloglucan side chains. Predominantly catalyze 6-O-monoacetylation of Gal residues in the Fuc-Gal-Xyl trisaccharide side chains of xyloglucan oligomers. The polypeptide is Xyloglucan O-acetyltransferase 1 (Populus trichocarpa (Western balsam poplar)).